We begin with the raw amino-acid sequence, 104 residues long: Seminal ribonuclease (104 aa).

4 cysteine pairs are disulfide-bonded: C12-C70, C26-C81, C44-C96, and C51-C58. Substrate contacts are provided by residues 27–31 (KPVNT), K52, and R71.

It belongs to the pancreatic ribonuclease family. Homodimer; disulfide-linked.

Its subcellular location is the secreted. It catalyses the reaction an [RNA] containing cytidine + H2O = an [RNA]-3'-cytidine-3'-phosphate + a 5'-hydroxy-ribonucleotide-3'-[RNA].. It carries out the reaction an [RNA] containing uridine + H2O = an [RNA]-3'-uridine-3'-phosphate + a 5'-hydroxy-ribonucleotide-3'-[RNA].. The polypeptide is Seminal ribonuclease (SRN) (Saiga tatarica (Saiga antelope)).